The following is a 31-amino-acid chain: Photosystem II reaction center protein T (31 aa).

A helical membrane pass occupies residues 3–23 (ALVYTFLLVGTLGIIFFSIFF).

The protein belongs to the PsbT family. PSII is composed of 1 copy each of membrane proteins PsbA, PsbB, PsbC, PsbD, PsbE, PsbF, PsbH, PsbI, PsbJ, PsbK, PsbL, PsbM, PsbT, PsbY, PsbZ, Psb30/Ycf12, at least 3 peripheral proteins of the oxygen-evolving complex and a large number of cofactors. It forms dimeric complexes.

The protein localises to the plastid. It localises to the chloroplast thylakoid membrane. Functionally, found at the monomer-monomer interface of the photosystem II (PS II) dimer, plays a role in assembly and dimerization of PSII. PSII is a light-driven water plastoquinone oxidoreductase, using light energy to abstract electrons from H(2)O, generating a proton gradient subsequently used for ATP formation. This Chlamydomonas reinhardtii (Chlamydomonas smithii) protein is Photosystem II reaction center protein T.